The chain runs to 598 residues: MKPTGTDPRILSIAAEVAKSPEQNVPVILLKLKEIINITPLGSSELKKIKQDIYCYDLIQYCLLVLSQDYSRIQGGWTTISQLTQILSHCCVGLEPGEDAEEFYNELLPSAAENFLVLGRQLQTCFINAAKAEEKDELLHFFQIVTDSLFWLLGGHVELIQNVLQSDHFLHLLQADNVQIGSAVMMMLQNILQINSGDLLRIGRKALYSILDEVIFKLFSTPSPVIRSTATKLLLLMAESHQEILILLRQSTCYKGLRRLLSKQETGTEFSQELRQLVGLLSPMVYQEVEEQKLHQAACLIQAYWKGFQTRKRLKKLPSAVIALQRSFRSKRSKMLLEINRQKEEEDLKLQLQLQRQRAMRLSRELQLSMLEIVHPGQVEKHYREMEEKSALIIQKHWRGYRERKNFHQQRQSLIEYKAAVTLQRAALKFLAKCRKKKKLFAPWRGLQELTDARRVELKKRVDDYVRRHLGSPMSDVVSRELHAQAQERLQHYFMGRALEERAQQHREALIAQISTNVEQLMKAPSLKEAEGKEPELFLSRSRPVAAKAKQAHLTTLKHIQAPWWKKLGEESGDEIDVPKDELSIELENLFIGGTKPP.

The interval 1–157 (MKPTGTDPRI…SLFWLLGGHV (157 aa)) is interaction with BBS1, BBS8 and BBS9. The interaction with CEP290, BBS1, BBS2, BBS4, BBS5, BBS7, BBS8 and BBS9 stretch occupies residues 287–598 (QEVEEQKLHQ…NLFIGGTKPP (312 aa)). 4 IQ domains span residues 294–317 (LHQA…LKKL), 318–338 (PSAV…MLLE), 387–416 (EEKS…SLIE), and 417–437 (YKAA…CRKK). Residues 336–373 (LLEINRQKEEEDLKLQLQLQRQRAMRLSRELQLSMLEI) are a coiled coil. An interaction with BBS1, BBS2, BBS4, BBS7, BBS8 and BBS9 region spans residues 530–598 (AEGKEPELFL…NLFIGGTKPP (69 aa)). Residue Ser572 is modified to Phosphoserine.

As to quaternary structure, interacts with CEP290/NPHP6; IQCB1/NPHP5 and CEP290 are proposed to form a functional NPHP5-6 module/NPHP6; localized to the centrosome. Interacts with calmodulin, ATXN10. Interacts with NPHP1, INVS, NPHP4 and RPGRIP1L; these interactions likely require additional interactors. Associates with the BBSome complex; interacts with BBS1, BBS2, BBS4, BBS5, BBS7, BBS8 and BBS9. In terms of tissue distribution, ubiquitously expressed in fetal and adult tissues. Localized to the outer segments and connecting cilia of photoreceptor cells. Up-regulated in a number of primary colorectal and gastric tumors.

The protein resides in the cytoplasm. The protein localises to the cytoskeleton. It localises to the microtubule organizing center. It is found in the centrosome. Its subcellular location is the centriole. Its function is as follows. Involved in ciliogenesis. The function in an early step in cilia formation depends on its association with CEP290/NPHP6. Involved in regulation of the BBSome complex integrity, specifically for presence of BBS2 and BBS5 in the complex, and in ciliary targeting of selected BBSome cargos. May play a role in controlling entry of the BBSome complex to cilia possibly implicating CEP290/NPHP6. This is IQ calmodulin-binding motif-containing protein 1 (IQCB1) from Homo sapiens (Human).